The sequence spans 411 residues: Probable phosphatase HAD1 (411 aa).

Polar residues predominate over residues 14–23; sequence LPSPNTSQPP. The interval 14-33 is disordered; that stretch reads LPSPNTSQPPSAAPSRRGSF. D61 functions as the Nucleophile in the catalytic mechanism. Mg(2+)-binding residues include D61, D63, and D338. D63 (proton donor) is an active-site residue. Residues 296 to 386 form a disordered region; the sequence is PRPTPDVTPV…QSGQAGVTLD (91 aa). Over residues 326–345 the composition is skewed to polar residues; the sequence is VRNTQTIMKGSDDLTGNDSV. The segment covering 362 to 373 has biased composition (basic and acidic residues); sequence SVEKRAEMEFHR.

It belongs to the HAD-like hydrolase superfamily. Post-translationally, phosphorylated.

Its function is as follows. Probable phosphatase. Required for cell wall integrity and virulence. This chain is Probable phosphatase HAD1, found in Cryptococcus neoformans var. grubii serotype A (strain H99 / ATCC 208821 / CBS 10515 / FGSC 9487) (Filobasidiella neoformans var. grubii).